The sequence spans 396 residues: Bifunctional enzyme Fae/Hps (396 aa).

Residues 1 to 161 are formaldehyde-activating enzyme; it reads MYQIGEALIG…YEKDRGVHAI (161 aa). Residue histidine 17 is the Proton donor of the active site. Substrate contacts are provided by aspartate 19, leucine 48, lysine 66, threonine 68, and glutamine 83. Residues 162–396 are 3-hexulose-6-phosphate synthase; sequence MGYKITRLWD…IDQYRIMTDF (235 aa).

The protein in the N-terminal section; belongs to the formaldehyde-activating enzyme family. It in the C-terminal section; belongs to the HPS/KGPDC family. HPS subfamily.

It catalyses the reaction 5,6,7,8-tetrahydromethanopterin + formaldehyde = 5,10-methylenetetrahydromethanopterin + H2O. The catalysed reaction is D-ribulose 5-phosphate + formaldehyde = D-arabino-hex-3-ulose 6-phosphate. It participates in carbohydrate biosynthesis; D-ribose 5-phosphate biosynthesis. Functionally, catalyzes the condensation of formaldehyde with tetrahydromethanopterin (H(4)MPT) to 5,10-methylenetetrahydromethanopterin. In terms of biological role, catalyzes the reversible formation of ribulose-5-phosphate and formaldehyde from 3-hexulose-6-phosphate. The protein is Bifunctional enzyme Fae/Hps of Methanocella arvoryzae (strain DSM 22066 / NBRC 105507 / MRE50).